Here is a 239-residue protein sequence, read N- to C-terminus: tRNA (guanine-N(7)-)-methyltransferase (239 aa).

Positions 69, 94, 121, and 144 each coordinate S-adenosyl-L-methionine. Asp144 is a catalytic residue. Lys148 contributes to the substrate binding site. The interval 150–155 (RHNKRR) is interaction with RNA. Substrate is bound by residues Asp180 and 217–220 (TKFE).

The protein belongs to the class I-like SAM-binding methyltransferase superfamily. TrmB family. In terms of assembly, monomer.

The enzyme catalyses guanosine(46) in tRNA + S-adenosyl-L-methionine = N(7)-methylguanosine(46) in tRNA + S-adenosyl-L-homocysteine. The protein operates within tRNA modification; N(7)-methylguanine-tRNA biosynthesis. Functionally, catalyzes the formation of N(7)-methylguanine at position 46 (m7G46) in tRNA. The chain is tRNA (guanine-N(7)-)-methyltransferase from Salmonella typhimurium (strain LT2 / SGSC1412 / ATCC 700720).